The following is a 1002-amino-acid chain: MESVRTLWLSVALALAVGSRVVRGHPQPCRVPTRAGASVRLAALLPRAPAARARVLAALATPAPRLPHNLSLELVAVASPTRDPASLARGLCQVLAPPGVVASIAFPEARPELRLLQFLAAATETPVVSVLRREVRTALGAPTPFHLQLDWASPLETILDVLVSLVRAHAWEDIALVLCRVRDPGSLVTLWTNHASQAPKFVLDLSRLDSRNDSLRAGLALLGALEGGGTPVPAAVLLGCSTARAHEVLEAAPPGPQWLLGTPLPAEALPTTGLPPGVLALGETEQHSLEAVVHDMVELVAQALSSMALVHPERALLPAVVNCDDLKTGGSEATGRTLARFLGNTSFQGRTGAVWVTGSSQVHVSRHFKVWSLRRDPLGAPAWATVGSWQDGQLDFQPGAAALRVPSPSGTQARPKLRVVTLVEHPFVFTRESDEDGQCPAGQLCLDPGTNDSARLDALFAALVNGSVPRTLRRCCYGYCIDLLERLAEDLAFDFELYIVGDGKYGALRDGRWTGLVGDLLAGRAHMAVTSFSINSARSQVVDFTSPFFSTSLGIMVRTRDTASPIGAFMWPLHWSMWVGVFAALHLTALFLTLYEWRSPYGLTPRGRNRGTVFSYSSALNLCYAILFGRTVSSKTPKCPTGRFLMNLWAIFCLLVLSSYTANLAAVMVGDKTFEELSGIHDPKLHHPSQGFRFGTVWESSAEAYIKASFPEMHAHMRRHSAPTTPHGVAMLTSDPPKLNAFIMDKSLLDYEVSIDADCKLLTVGKPFAIEGYGIGLPQNSPLTSNLSEFISRYKSSGFIDLLHDKWYKMVPCGKRVFAVTETLQMGVYHFSGLFVLLCLGLGSALLTSLGEHVFYRLVLPRIRRGNKLQYWLHTSQKIHRALNTGPPEGQQERAEQERSGPKDELPATDGAGRWRRVRRAVERERRVRFLLEPGEAGGDRPWLCSNGPGLQAELRELELRIEAARERLRSALLRRGELRALLGDGTRLRPLRLLHAAPAES.

An N-terminal signal peptide occupies residues 1–24; that stretch reads MESVRTLWLSVALALAVGSRVVRG. Topologically, residues 25-574 are extracellular; sequence HPQPCRVPTR…PIGAFMWPLH (550 aa). Asparagine 69, asparagine 212, asparagine 344, asparagine 451, and asparagine 465 each carry an N-linked (GlcNAc...) asparagine glycan. Disulfide bonds link cysteine 439-cysteine 475 and cysteine 445-cysteine 476. Glycine is bound by residues serine 531, serine 533, and arginine 538. 2 residues coordinate D-serine: serine 533 and arginine 538. Residues 575-594 form a helical membrane-spanning segment; it reads WSMWVGVFAALHLTALFLTL. At 595-615 the chain is on the cytoplasmic side; sequence YEWRSPYGLTPRGRNRGTVFS. The discontinuously helical intramembrane region spans 616–627; that stretch reads YSSALNLCYAIL. At 628–641 the chain is on the cytoplasmic side; the sequence is FGRTVSSKTPKCPT. The helical transmembrane segment at 642–661 threads the bilayer; sequence GRFLMNLWAIFCLLVLSSYT. At 662 to 832 the chain is on the extracellular side; sequence ANLAAVMVGD…TLQMGVYHFS (171 aa). Serine 701 is a glycine binding site. Serine 701, alanine 702, and aspartate 745 together coordinate D-serine. Position 745 (aspartate 745) interacts with glycine. Asparagine 786 carries N-linked (GlcNAc...) asparagine glycosylation. The chain crosses the membrane as a helical span at residues 833–848; the sequence is GLFVLLCLGLGSALLT. At 849–1002 the chain is on the cytoplasmic side; the sequence is SLGEHVFYRL…RLLHAAPAES (154 aa). Positions 882 to 910 are disordered; the sequence is ALNTGPPEGQQERAEQERSGPKDELPATD. Residues 891–906 show a composition bias toward basic and acidic residues; sequence QQERAEQERSGPKDEL. Positions 944–985 form a coiled coil; sequence LCSNGPGLQAELRELELRIEAARERLRSALLRRGELRALLGD. The interval 951–984 is involved in the trafficking and surface expression of NMDARs; that stretch reads LQAELRELELRIEAARERLRSALLRRGELRALLG.

It belongs to the glutamate-gated ion channel (TC 1.A.10.1) family. NR3B/GRIN3B subfamily. Forms heterotetrameric channels that contain at least two GluN1 subunits and at least a combination of one GluN2 and one GluN3 subunits (in vitro). Forms heterotetrameric channels composed of two GluN1/zeta subunits (GRIN1), and two identical GluN3 subunits (GRIN3A or GRIN3B) (in vitro). Does not form functional homomeric channels. In terms of tissue distribution, expressed in the hippocampus, the corpus callosum, in the facial and trigeminal nuclei of the brainstem and the ventral horn of the spinal cord.

The protein localises to the cell membrane. It is found in the postsynaptic cell membrane. It carries out the reaction Ca(2+)(in) = Ca(2+)(out). The catalysed reaction is Na(+)(in) = Na(+)(out). Excitatory glycine receptors are inhibited by D-serine at a concentrion of 100uM. Its function is as follows. Component of a non-conventional N-methyl-D-aspartate (NMDA) receptors (NMDARs) that function as heterotetrameric, ligand-gated cation channels with low calcium permeability and low voltage-dependent block by Mg(2+). Forms glutamatergic receptor complexes with GluN1 and GluN2 subunits which are activated by glycine binding to the GluN1 and GluN3 subunits and L-glutamate binding to GluN2 subunits. Forms excitatory glycinergic receptor complexes with GluN1 alone which are activated by glycine binding to the GluN1 and GluN3 subunits. GluN3B subunit also binds D-serine and, in the absence of glycine, activates glycinergic receptor complexes, but with lower efficacy than glycine. Each GluN3 subunit confers differential attributes to channel properties, including activation, deactivation and desensitization kinetics, pH sensitivity, Ca2(+) permeability, and binding to allosteric modulators. This is Glutamate receptor ionotropic, NMDA 3B from Rattus norvegicus (Rat).